Reading from the N-terminus, the 157-residue chain is D-aminoacyl-tRNA deacylase (157 aa).

Residues 137–138 carry the Gly-cisPro motif, important for rejection of L-amino acids motif; that stretch reads GP.

This sequence belongs to the DTD family. Homodimer.

It localises to the cytoplasm. The enzyme catalyses glycyl-tRNA(Ala) + H2O = tRNA(Ala) + glycine + H(+). It carries out the reaction a D-aminoacyl-tRNA + H2O = a tRNA + a D-alpha-amino acid + H(+). Its function is as follows. An aminoacyl-tRNA editing enzyme that deacylates mischarged D-aminoacyl-tRNAs. Also deacylates mischarged glycyl-tRNA(Ala), protecting cells against glycine mischarging by AlaRS. Acts via tRNA-based rather than protein-based catalysis; rejects L-amino acids rather than detecting D-amino acids in the active site. By recycling D-aminoacyl-tRNA to D-amino acids and free tRNA molecules, this enzyme counteracts the toxicity associated with the formation of D-aminoacyl-tRNA entities in vivo and helps enforce protein L-homochirality. This is D-aminoacyl-tRNA deacylase from Roseiflexus castenholzii (strain DSM 13941 / HLO8).